A 425-amino-acid chain; its full sequence is UDP-N-acetylglucosamine 1-carboxyvinyltransferase (425 aa).

22–23 (KN) is a phosphoenolpyruvate binding site. Arg-93 contributes to the UDP-N-acetyl-alpha-D-glucosamine binding site. Asp-117 (proton donor) is an active-site residue. Asp-312 and Met-334 together coordinate UDP-N-acetyl-alpha-D-glucosamine.

This sequence belongs to the EPSP synthase family. MurA subfamily.

The protein localises to the cytoplasm. It carries out the reaction phosphoenolpyruvate + UDP-N-acetyl-alpha-D-glucosamine = UDP-N-acetyl-3-O-(1-carboxyvinyl)-alpha-D-glucosamine + phosphate. The protein operates within cell wall biogenesis; peptidoglycan biosynthesis. Its function is as follows. Cell wall formation. Adds enolpyruvyl to UDP-N-acetylglucosamine. The sequence is that of UDP-N-acetylglucosamine 1-carboxyvinyltransferase from Treponema pallidum (strain Nichols).